The primary structure comprises 985 residues: UPF0182 protein Cgl0786/cg0896 (985 aa).

7 helical membrane passes run 19–39 (VTWI…SVGF), 63–83 (IVLF…AGYF), 115–135 (VMVI…QRSW), 176–196 (SMML…MGGI), 215–235 (TQLA…YWLD), 262–282 (KIIL…AIFL), and 290–310 (LAVV…PLML). The segment at 904–944 (KEAQDIEEVDGTATTPSTDETDTDTDQPATETPTAPVSEAE) is disordered. Residues 929 to 939 (DQPATETPTAP) are compositionally biased toward low complexity.

It belongs to the UPF0182 family.

Its subcellular location is the cell membrane. The chain is UPF0182 protein Cgl0786/cg0896 from Corynebacterium glutamicum (strain ATCC 13032 / DSM 20300 / JCM 1318 / BCRC 11384 / CCUG 27702 / LMG 3730 / NBRC 12168 / NCIMB 10025 / NRRL B-2784 / 534).